The chain runs to 193 residues: dCTP deaminase (193 aa).

DCTP contacts are provided by residues 110-115 (RSSLAR), D128, 136-138 (VLE), Y171, K178, and Q182. Catalysis depends on E138, which acts as the Proton donor/acceptor. Positions 174 to 193 (RKSAKYKDQQEAVASRISQD) are disordered.

It belongs to the dCTP deaminase family. Homotrimer.

It carries out the reaction dCTP + H2O + H(+) = dUTP + NH4(+). It functions in the pathway pyrimidine metabolism; dUMP biosynthesis; dUMP from dCTP (dUTP route): step 1/2. In terms of biological role, catalyzes the deamination of dCTP to dUTP. The protein is dCTP deaminase of Shewanella baltica (strain OS223).